The sequence spans 90 residues: Progonadoliberin-1 (90 aa).

The N-terminal stretch at 1–24 is a signal peptide; the sequence is MSRHVTVVLLLAIVLLLSSHMIHG. Pyrrolidone carboxylic acid is present on glutamine 25. Residue glycine 34 is modified to Glycine amide.

It belongs to the GnRH family. Forebrain.

The protein localises to the secreted. In terms of biological role, stimulates the secretion of gonadotropins. The chain is Progonadoliberin-1 (gnrh1) from Aquarana catesbeiana (American bullfrog).